The sequence spans 83 residues: MRKGTVKEVLAKIKYDPRENEEDYYIIIEHRGSYGNVRKIPVRIIELGHGYFFIGETQIPYHRILKVVRKDGKVVWESRKIRK.

It belongs to the UPF0248 family.

The sequence is that of UPF0248 protein PYRAB10580 from Pyrococcus abyssi (strain GE5 / Orsay).